We begin with the raw amino-acid sequence, 510 residues long: 2,3-bisphosphoglycerate-independent phosphoglycerate mutase (510 aa).

Mn(2+) is bound by residues Asp-12 and Ser-62. The active-site Phosphoserine intermediate is the Ser-62. Substrate-binding positions include His-123, Arg-152 to Asp-153, Arg-184, Arg-190, Arg-257 to Arg-260, and Lys-331. 5 residues coordinate Mn(2+): Asp-399, His-403, Asp-440, His-441, and His-458.

It belongs to the BPG-independent phosphoglycerate mutase family. As to quaternary structure, monomer. It depends on Mn(2+) as a cofactor.

It carries out the reaction (2R)-2-phosphoglycerate = (2R)-3-phosphoglycerate. It participates in carbohydrate degradation; glycolysis; pyruvate from D-glyceraldehyde 3-phosphate: step 3/5. Functionally, catalyzes the interconversion of 2-phosphoglycerate and 3-phosphoglycerate. The chain is 2,3-bisphosphoglycerate-independent phosphoglycerate mutase from Lawsonia intracellularis (strain PHE/MN1-00).